Consider the following 418-residue polypeptide: Serine hydroxymethyltransferase (418 aa).

Residues Leu117 and 121–123 (GHL) contribute to the (6S)-5,6,7,8-tetrahydrofolate site. Lys225 carries the post-translational modification N6-(pyridoxal phosphate)lysine.

This sequence belongs to the SHMT family. Homodimer. Pyridoxal 5'-phosphate is required as a cofactor.

It localises to the cytoplasm. It carries out the reaction (6R)-5,10-methylene-5,6,7,8-tetrahydrofolate + glycine + H2O = (6S)-5,6,7,8-tetrahydrofolate + L-serine. The protein operates within one-carbon metabolism; tetrahydrofolate interconversion. It participates in amino-acid biosynthesis; glycine biosynthesis; glycine from L-serine: step 1/1. Its function is as follows. Catalyzes the reversible interconversion of serine and glycine with tetrahydrofolate (THF) serving as the one-carbon carrier. This reaction serves as the major source of one-carbon groups required for the biosynthesis of purines, thymidylate, methionine, and other important biomolecules. Also exhibits THF-independent aldolase activity toward beta-hydroxyamino acids, producing glycine and aldehydes, via a retro-aldol mechanism. This Mycoplasma mobile (strain ATCC 43663 / 163K / NCTC 11711) (Mesomycoplasma mobile) protein is Serine hydroxymethyltransferase.